A 371-amino-acid polypeptide reads, in one-letter code: Assembly protein G7 (371 aa).

It belongs to the chordopoxvirinae G7 family. As to quaternary structure, part of a complex composed of A30, G7, F10 kinase, A15, D2, D3, and J1. In terms of processing, phosphorylated on serines by F10 kinase, phosphorylation state is regulated by H1 phosphatase. Undergoes proteolytic processing during morphogenesis, probably required for the transformation of immature virions (IV) into mature virions (MV).

Its subcellular location is the host cytoplasm. It is found in the virion. Late protein which is a part of a large complex required for early virion morphogenesis. This complex participates in the formation of virosomes and the incorporation of virosomal contents into nascent immature virions. The chain is Assembly protein G7 from Homo sapiens (Human).